We begin with the raw amino-acid sequence, 326 residues long: Transposase InsH for insertion sequence element IS5A (326 aa).

It belongs to the transposase 11 family.

Its function is as follows. Involved in the transposition of the insertion sequence IS5. The protein is Transposase InsH for insertion sequence element IS5A (insH1) of Escherichia coli (strain K12).